Reading from the N-terminus, the 298-residue chain is Protoheme IX farnesyltransferase (298 aa).

9 helical membrane passes run 16 to 36 (VVAL…PDMP), 45 to 65 (ALGF…NQLL), 93 to 113 (VFAG…VNVI), 114 to 134 (TAVL…VYLK), 141 to 161 (IVIG…AVTG), 172 to 192 (SLLV…LAIF), 223 to 243 (VLLA…VFYL), 244 to 264 (GGAV…LNPP), and 277 to 297 (IVYL…LPWV).

Belongs to the UbiA prenyltransferase family. Protoheme IX farnesyltransferase subfamily.

Its subcellular location is the cell inner membrane. The catalysed reaction is heme b + (2E,6E)-farnesyl diphosphate + H2O = Fe(II)-heme o + diphosphate. The protein operates within porphyrin-containing compound metabolism; heme O biosynthesis; heme O from protoheme: step 1/1. Converts heme B (protoheme IX) to heme O by substitution of the vinyl group on carbon 2 of heme B porphyrin ring with a hydroxyethyl farnesyl side group. This Xanthomonas oryzae pv. oryzae (strain MAFF 311018) protein is Protoheme IX farnesyltransferase.